The sequence spans 1270 residues: ATP-dependent helicase/nuclease subunit A (1270 aa).

The region spanning 3-476 is the UvrD-like helicase ATP-binding domain; sequence TKWTEEQELA…IMLYKNFRSR (474 aa). 24–31 is an ATP binding site; that stretch reads AAAGSGKT. In terms of domain architecture, UvrD-like helicase C-terminal spans 528–823; the sequence is IENLKVAGDI…RIMSIHKSKG (296 aa).

It belongs to the helicase family. AddA subfamily. In terms of assembly, heterodimer of AddA and AddB/RexB. Requires Mg(2+) as cofactor.

The catalysed reaction is Couples ATP hydrolysis with the unwinding of duplex DNA by translocating in the 3'-5' direction.. It catalyses the reaction ATP + H2O = ADP + phosphate + H(+). Functionally, the heterodimer acts as both an ATP-dependent DNA helicase and an ATP-dependent, dual-direction single-stranded exonuclease. Recognizes the chi site generating a DNA molecule suitable for the initiation of homologous recombination. The AddA nuclease domain is required for chi fragment generation; this subunit has the helicase and 3' -&gt; 5' nuclease activities. This is ATP-dependent helicase/nuclease subunit A from Clostridium perfringens (strain SM101 / Type A).